The primary structure comprises 67 residues: MKATDLRQQTTEELNGKVGSWKEELFNLRFQLATGQLENPARIREVRKSIARAKTVLRERELGINNA.

Belongs to the universal ribosomal protein uL29 family.

The protein is Large ribosomal subunit protein uL29 of Exiguobacterium sibiricum (strain DSM 17290 / CCUG 55495 / CIP 109462 / JCM 13490 / 255-15).